The following is a 96-amino-acid chain: uncharacterized protein (96 aa).

It is found in the host cytoplasm. This is an uncharacterized protein from Escherichia phage Mu (Bacteriophage Mu).